Consider the following 69-residue polypeptide: MKAIISLLLISAMVFSMIEAVPVEEGLQLFEGERGCLPHNRFCNALSGPRCCSGLRCKELSIWDSRCLG.

The first 20 residues, 1 to 20 (MKAIISLLLISAMVFSMIEA), serve as a signal peptide directing secretion. A propeptide spanning residues 21 to 34 (VPVEEGLQLFEGER) is cleaved from the precursor. Cystine bridges form between cysteine 36–cysteine 52, cysteine 43–cysteine 57, and cysteine 51–cysteine 67. A Leucine amide modification is found at leucine 68.

Belongs to the neurotoxin 01 (U2-agtx) family. In terms of tissue distribution, expressed by the venom gland.

The protein localises to the secreted. In terms of biological role, insect active toxin causing rapid but reversible paralysis in crickets. No activity shown in mammals. Does not show effect on mammalian voltage-gated calcium channels. The chain is U2-agatoxin-Ao1g from Agelena orientalis (Funnel-web spider).